Reading from the N-terminus, the 133-residue chain is Agouti-signaling protein (133 aa).

A signal peptide spans 1-22 (MDVIHLFLATLLVSLCFLTAYS). A compositionally biased stretch (basic and acidic residues) spans 26–36 (PEEKPKDDRSL). The disordered stretch occupies residues 26–83 (PEEKPKDDRSLRNNSSMNLLDSPSVSIMALNKKSKKISRKEAEKKKRSSKKKASMTKV). Residues 37 to 50 (RNNSSMNLLDSPSV) show a composition bias toward polar residues. Residues asparagine 38 and asparagine 39 are each glycosylated (N-linked (GlcNAc...) asparagine). The span at 70–79 (KKRSSKKKAS) shows a compositional bias: basic residues. Disulfide bonds link cysteine 94-cysteine 109, cysteine 101-cysteine 115, cysteine 108-cysteine 126, cysteine 112-cysteine 133, and cysteine 117-cysteine 124. Positions 94 to 133 (CVATRDSCKPPAPACCDPCASCQCRFFRSACSCRVLTRTC) constitute an Agouti domain.

It localises to the secreted. Functionally, involved in the regulation of melanogenesis. The binding of ASP to MC1R precludes alpha-MSH initiated signaling and thus blocks production of cAMP, leading to a down-regulation of eumelanogenesis (brown/black pigment) and thus increasing synthesis of pheomelanin (yellow/red pigment). The polypeptide is Agouti-signaling protein (ASIP) (Equus caballus (Horse)).